Consider the following 493-residue polypeptide: tRNA (uracil-5-)-methyltransferase homolog B (493 aa).

A mitochondrion-targeting transit peptide spans 1-14 (MHNPRLFLSRAGFF). 3 residues coordinate S-adenosyl-L-methionine: glutamine 312, glutamate 362, and asparagine 412. Cysteine 440 (nucleophile) is an active-site residue. The active-site Proton acceptor is glutamate 486.

The protein belongs to the class I-like SAM-binding methyltransferase superfamily. RNA M5U methyltransferase family.

It localises to the mitochondrion matrix. It carries out the reaction uridine(54) in tRNA + S-adenosyl-L-methionine = 5-methyluridine(54) in tRNA + S-adenosyl-L-homocysteine + H(+). The enzyme catalyses a uridine in 12S rRNA + S-adenosyl-L-methionine = a 5-methyluridine in 12S rRNA + S-adenosyl-L-homocysteine + H(+). Its function is as follows. Mitochondrial S-adenosyl-L-methionine-dependent methyltransferase that catalyzes the formation of 5-methyl-uridine in tRNAs and 12S rRNA. Catalyzes the methylation of uridine at position 54 (m5U54) in all tRNAs. Specifically methylates the uridine in position 425 of 12S rRNA (m5U425). Does not affect RNA stability or mitochondrial translation. The sequence is that of tRNA (uracil-5-)-methyltransferase homolog B from Mus musculus (Mouse).